A 310-amino-acid chain; its full sequence is Ribosomal RNA small subunit methyltransferase H (310 aa).

Residues 33–35 (AGH), Asp53, Phe79, Asp100, and Gln107 each bind S-adenosyl-L-methionine.

This sequence belongs to the methyltransferase superfamily. RsmH family.

The protein resides in the cytoplasm. The catalysed reaction is cytidine(1402) in 16S rRNA + S-adenosyl-L-methionine = N(4)-methylcytidine(1402) in 16S rRNA + S-adenosyl-L-homocysteine + H(+). Its function is as follows. Specifically methylates the N4 position of cytidine in position 1402 (C1402) of 16S rRNA. The chain is Ribosomal RNA small subunit methyltransferase H from Desulfitobacterium hafniense (strain DSM 10664 / DCB-2).